The sequence spans 1775 residues: Stereocilin (1775 aa).

Positions 1 to 22 (MALSLWPLLLLLLLLLLLSFAV) are cleaved as a signal peptide. Residues asparagine 65, asparagine 202, asparagine 297, asparagine 366, asparagine 427, asparagine 476, asparagine 540, asparagine 565, asparagine 656, asparagine 824, asparagine 916, asparagine 964, asparagine 1179, and asparagine 1274 are each glycosylated (N-linked (GlcNAc...) asparagine).

It belongs to the stereocilin family.

The protein resides in the cell surface. It localises to the cell projection. It is found in the kinocilium. Its subcellular location is the stereocilium. Essential to the formation of horizontal top connectors between outer hair cell stereocilia. The chain is Stereocilin (STRC) from Homo sapiens (Human).